Here is a 266-residue protein sequence, read N- to C-terminus: Ribonuclease 3 (266 aa).

The segment at Met-1 to Ala-35 is disordered. The region spanning Met-43 to Gly-171 is the RNase III domain. Glu-84 contributes to the Mg(2+) binding site. Asp-88 is an active-site residue. Residues Asp-157 and Glu-160 each coordinate Mg(2+). Glu-160 is an active-site residue. Residues Asp-196–Val-265 form the DRBM domain.

Belongs to the ribonuclease III family. In terms of assembly, homodimer. Mg(2+) serves as cofactor.

The protein resides in the cytoplasm. The enzyme catalyses Endonucleolytic cleavage to 5'-phosphomonoester.. Functionally, digests double-stranded RNA. Involved in the processing of primary rRNA transcript to yield the immediate precursors to the large and small rRNAs (23S and 16S). Processes some mRNAs, and tRNAs when they are encoded in the rRNA operon. Processes pre-crRNA and tracrRNA of type II CRISPR loci if present in the organism. This is Ribonuclease 3 from Nitrobacter winogradskyi (strain ATCC 25391 / DSM 10237 / CIP 104748 / NCIMB 11846 / Nb-255).